The chain runs to 339 residues: Dihydroorotate dehydrogenase (quinone) (339 aa).

FMN-binding positions include Ala62–Lys66 and Thr86. Lys66 contributes to the substrate binding site. Asn111 to Phe115 lines the substrate pocket. FMN contacts are provided by Asn139 and Asn172. A substrate-binding site is contributed by Asn172. The Nucleophile role is filled by Ser175. A substrate-binding site is contributed by Asn177. FMN is bound by residues Lys217 and Thr245. Asn246 to Thr247 is a binding site for substrate. FMN contacts are provided by residues Gly268, Gly297, and Tyr318–Ser319.

The protein belongs to the dihydroorotate dehydrogenase family. Type 2 subfamily. As to quaternary structure, monomer. The cofactor is FMN.

The protein resides in the cell membrane. The enzyme catalyses (S)-dihydroorotate + a quinone = orotate + a quinol. Its pathway is pyrimidine metabolism; UMP biosynthesis via de novo pathway; orotate from (S)-dihydroorotate (quinone route): step 1/1. Its function is as follows. Catalyzes the conversion of dihydroorotate to orotate with quinone as electron acceptor. The sequence is that of Dihydroorotate dehydrogenase (quinone) from Shewanella sp. (strain MR-4).